We begin with the raw amino-acid sequence, 390 residues long: GTPase Obg (390 aa).

The Obg domain occupies 1-159; it reads MKFVDEASVK…RELRLELLLL (159 aa). Positions 160–333 constitute an OBG-type G domain; sequence ADVGMLGLPN…LCFKLGEFME (174 aa). GTP is bound by residues 166-173, 191-195, 213-216, 283-286, and 314-316; these read GLPNAGKS, FTTLI, DIPG, NKVD, and SAV. Serine 173 and threonine 193 together coordinate Mg(2+).

This sequence belongs to the TRAFAC class OBG-HflX-like GTPase superfamily. OBG GTPase family. Monomer. The cofactor is Mg(2+).

The protein resides in the cytoplasm. Its function is as follows. An essential GTPase which binds GTP, GDP and possibly (p)ppGpp with moderate affinity, with high nucleotide exchange rates and a fairly low GTP hydrolysis rate. Plays a role in control of the cell cycle, stress response, ribosome biogenesis and in those bacteria that undergo differentiation, in morphogenesis control. The protein is GTPase Obg of Vibrio atlanticus (strain LGP32) (Vibrio splendidus (strain Mel32)).